We begin with the raw amino-acid sequence, 449 residues long: Tubulin alpha chain (449 aa).

Residue glutamine 11 coordinates GTP. Lysine 40 carries the N6-acetyllysine modification. GTP contacts are provided by glutamate 71, serine 140, glycine 144, threonine 145, threonine 179, asparagine 206, and asparagine 228. Glutamate 71 contacts Mg(2+). Glutamate 254 is an active-site residue.

The protein belongs to the tubulin family. Dimer of alpha and beta chains. A typical microtubule is a hollow water-filled tube with an outer diameter of 25 nm and an inner diameter of 15 nM. Alpha-beta heterodimers associate head-to-tail to form protofilaments running lengthwise along the microtubule wall with the beta-tubulin subunit facing the microtubule plus end conferring a structural polarity. Microtubules usually have 13 protofilaments but different protofilament numbers can be found in some organisms and specialized cells. The cofactor is Mg(2+). Post-translationally, undergoes a tyrosination/detyrosination cycle, the cyclic removal and re-addition of a C-terminal tyrosine residue by the enzymes tubulin tyrosine carboxypeptidase (TTCP) and tubulin tyrosine ligase (TTL), respectively. In terms of processing, some glutamate residues at the C-terminus are either polyglutamylated or polyglycylated. These 2 modifications occur exclusively on glutamate residues and result in either polyglutamate or polyglycine chains on the gamma-carboxyl group. Both modifications can coexist on the same protein on adjacent residues, and lowering polyglycylation levels increases polyglutamylation, and reciprocally. The precise function of such modifications is still unclear but they regulate the assembly and dynamics of axonemal microtubules. Acetylation of alpha chains at Lys-40 stabilizes microtubules and affects affinity and processivity of microtubule motors. This modification has a role in multiple cellular functions, ranging from cell motility, cell cycle progression or cell differentiation to intracellular trafficking and signaling.

The protein resides in the cytoplasm. The protein localises to the cytoskeleton. The enzyme catalyses GTP + H2O = GDP + phosphate + H(+). Tubulin is the major constituent of microtubules, a cylinder consisting of laterally associated linear protofilaments composed of alpha- and beta-tubulin heterodimers. Microtubules grow by the addition of GTP-tubulin dimers to the microtubule end, where a stabilizing cap forms. Below the cap, tubulin dimers are in GDP-bound state, owing to GTPase activity of alpha-tubulin. This is Tubulin alpha chain from Tetrahymena thermophila.